The sequence spans 331 residues: Ferredoxin--NADP reductase (331 aa).

Residues Glu-34, Gln-42, Tyr-47, Val-87, Phe-121, Asp-285, and Thr-325 each contribute to the FAD site.

This sequence belongs to the ferredoxin--NADP reductase type 2 family. As to quaternary structure, homodimer. It depends on FAD as a cofactor.

The catalysed reaction is 2 reduced [2Fe-2S]-[ferredoxin] + NADP(+) + H(+) = 2 oxidized [2Fe-2S]-[ferredoxin] + NADPH. This chain is Ferredoxin--NADP reductase, found in Lactiplantibacillus plantarum (strain ATCC BAA-793 / NCIMB 8826 / WCFS1) (Lactobacillus plantarum).